The primary structure comprises 330 residues: DNA-directed RNA polymerase subunit alpha (330 aa).

The interval 1-231 is alpha N-terminal domain (alpha-NTD); that stretch reads MQTNLLKPKT…EQLAVFAQLE (231 aa). The segment at 250 to 330 is alpha C-terminal domain (alpha-CTD); sequence FDPILLRPVD…NWPPAGLDKR (81 aa).

The protein belongs to the RNA polymerase alpha chain family. In terms of assembly, homodimer. The RNAP catalytic core consists of 2 alpha, 1 beta, 1 beta' and 1 omega subunit. When a sigma factor is associated with the core the holoenzyme is formed, which can initiate transcription.

The enzyme catalyses RNA(n) + a ribonucleoside 5'-triphosphate = RNA(n+1) + diphosphate. In terms of biological role, DNA-dependent RNA polymerase catalyzes the transcription of DNA into RNA using the four ribonucleoside triphosphates as substrates. In Paracidovorax citrulli (strain AAC00-1) (Acidovorax citrulli), this protein is DNA-directed RNA polymerase subunit alpha.